A 470-amino-acid polypeptide reads, in one-letter code: Methylenetetrahydrofolate--tRNA-(uracil-5-)-methyltransferase TrmFO (470 aa).

10–15 is an FAD binding site; the sequence is GAGLAG.

Belongs to the MnmG family. TrmFO subfamily. Requires FAD as cofactor.

Its subcellular location is the cytoplasm. It carries out the reaction uridine(54) in tRNA + (6R)-5,10-methylene-5,6,7,8-tetrahydrofolate + NADH + H(+) = 5-methyluridine(54) in tRNA + (6S)-5,6,7,8-tetrahydrofolate + NAD(+). It catalyses the reaction uridine(54) in tRNA + (6R)-5,10-methylene-5,6,7,8-tetrahydrofolate + NADPH + H(+) = 5-methyluridine(54) in tRNA + (6S)-5,6,7,8-tetrahydrofolate + NADP(+). Functionally, catalyzes the folate-dependent formation of 5-methyl-uridine at position 54 (M-5-U54) in all tRNAs. The sequence is that of Methylenetetrahydrofolate--tRNA-(uracil-5-)-methyltransferase TrmFO from Prochlorococcus marinus subsp. pastoris (strain CCMP1986 / NIES-2087 / MED4).